We begin with the raw amino-acid sequence, 299 residues long: Methionyl-tRNA formyltransferase (299 aa).

(6S)-5,6,7,8-tetrahydrofolate is bound at residue 109–112 (SLLP).

Belongs to the Fmt family.

It catalyses the reaction L-methionyl-tRNA(fMet) + (6R)-10-formyltetrahydrofolate = N-formyl-L-methionyl-tRNA(fMet) + (6S)-5,6,7,8-tetrahydrofolate + H(+). Functionally, attaches a formyl group to the free amino group of methionyl-tRNA(fMet). The formyl group appears to play a dual role in the initiator identity of N-formylmethionyl-tRNA by promoting its recognition by IF2 and preventing the misappropriation of this tRNA by the elongation apparatus. This chain is Methionyl-tRNA formyltransferase, found in Dinoroseobacter shibae (strain DSM 16493 / NCIMB 14021 / DFL 12).